Reading from the N-terminus, the 529-residue chain is Biotin-dependent 3-methylcrotonyl-coenzyme A carboxylase beta1 subunit (529 aa).

In terms of domain architecture, CoA carboxyltransferase N-terminal spans 16 to 272 (HRRLVAELNN…CEPAQWDVRR (257 aa)). Residues 275–521 (EPKYPQAELY…SLCAHAPLDQ (247 aa)) form the CoA carboxyltransferase C-terminal domain.

The protein belongs to the AccD/PCCB family. In terms of assembly, the biotin-dependent acyl-CoA carboxylase complex is composed of AccA1, which contains the biotin carboxylase (BC) and biotin carboxyl carrier protein (BCCP) domains, and AccD1, which contains the carboxyl transferase (CT) domain. The AccA1/AccD1 complex forms a dodecamer.

The enzyme catalyses 3-methylbut-2-enoyl-CoA + N(6)-carboxybiotinyl-L-lysyl-[protein] = 3-methyl-(2E)-glutaconyl-CoA + N(6)-biotinyl-L-lysyl-[protein]. It functions in the pathway amino-acid degradation; L-leucine degradation. Its function is as follows. Component of a biotin-dependent acyl-CoA carboxylase complex. This subunit transfers the CO2 from carboxybiotin to the CoA ester substrate. When associated with the alpha1 subunit AccA1, is involved in branched amino-acid catabolism with methylcrotonyl coenzyme A as the substrate. Shows residual with propionyl-CoA and acetyl-CoA. The sequence is that of Biotin-dependent 3-methylcrotonyl-coenzyme A carboxylase beta1 subunit from Mycobacterium tuberculosis (strain ATCC 25618 / H37Rv).